The primary structure comprises 445 residues: tRNA modification GTPase MnmE (445 aa).

(6S)-5-formyl-5,6,7,8-tetrahydrofolate is bound by residues Arg25, Glu83, and Lys121. In terms of domain architecture, TrmE-type G spans 217–371 (GVRVVILGPP…LLTLIQEKSR (155 aa)). GTP is bound by residues 227-232 (NAGKST), 246-252 (SEHPGTT), and 271-274 (DTAG). Residues Ser231 and Thr252 each coordinate Mg(2+). Lys445 contacts (6S)-5-formyl-5,6,7,8-tetrahydrofolate.

This sequence belongs to the TRAFAC class TrmE-Era-EngA-EngB-Septin-like GTPase superfamily. TrmE GTPase family. As to quaternary structure, homodimer. Heterotetramer of two MnmE and two MnmG subunits. K(+) serves as cofactor.

It is found in the cytoplasm. Functionally, exhibits a very high intrinsic GTPase hydrolysis rate. Involved in the addition of a carboxymethylaminomethyl (cmnm) group at the wobble position (U34) of certain tRNAs, forming tRNA-cmnm(5)s(2)U34. In Anaplasma phagocytophilum (strain HZ), this protein is tRNA modification GTPase MnmE.